Here is a 733-residue protein sequence, read N- to C-terminus: Phosphoribosylformylglycinamidine synthase subunit PurL (733 aa).

Residue H44 is part of the active site. ATP-binding residues include Y47 and K86. Mg(2+) is bound at residue E88. Residues 89–92 and R111 each bind substrate; that span reads SHNH. Catalysis depends on H90, which acts as the Proton acceptor. D112 contacts Mg(2+). Q233 serves as a coordination point for substrate. D261 is a Mg(2+) binding site. Residue 305 to 307 participates in substrate binding; the sequence is ESQ. ATP is bound by residues D492 and G529. N530 is a Mg(2+) binding site. S532 lines the substrate pocket.

The protein belongs to the FGAMS family. Monomer. Part of the FGAM synthase complex composed of 1 PurL, 1 PurQ and 2 PurS subunits.

Its subcellular location is the cytoplasm. It carries out the reaction N(2)-formyl-N(1)-(5-phospho-beta-D-ribosyl)glycinamide + L-glutamine + ATP + H2O = 2-formamido-N(1)-(5-O-phospho-beta-D-ribosyl)acetamidine + L-glutamate + ADP + phosphate + H(+). It functions in the pathway purine metabolism; IMP biosynthesis via de novo pathway; 5-amino-1-(5-phospho-D-ribosyl)imidazole from N(2)-formyl-N(1)-(5-phospho-D-ribosyl)glycinamide: step 1/2. Functionally, part of the phosphoribosylformylglycinamidine synthase complex involved in the purines biosynthetic pathway. Catalyzes the ATP-dependent conversion of formylglycinamide ribonucleotide (FGAR) and glutamine to yield formylglycinamidine ribonucleotide (FGAM) and glutamate. The FGAM synthase complex is composed of three subunits. PurQ produces an ammonia molecule by converting glutamine to glutamate. PurL transfers the ammonia molecule to FGAR to form FGAM in an ATP-dependent manner. PurS interacts with PurQ and PurL and is thought to assist in the transfer of the ammonia molecule from PurQ to PurL. This is Phosphoribosylformylglycinamidine synthase subunit PurL from Thermomicrobium roseum (strain ATCC 27502 / DSM 5159 / P-2).